An 826-amino-acid polypeptide reads, in one-letter code: (2S)-3-sulfopropanediol dehydratase (826 aa).

The PFL domain maps to 33–695 (PRVNRLRQAF…NTNASIDGRK (663 aa)). The Cysteine radical intermediate role is filled by cysteine 464. Glutamate 466 serves as the catalytic Proton acceptor. Residues 706-826 (PVHTDGGSHD…DLIQRTELHF (121 aa)) enclose the Glycine radical domain. At glycine 802 the chain carries Glycine radical.

The protein belongs to the glycyl radical enzyme (GRE) family. In terms of processing, requires the activating protein HpfH to generate the key active site glycyl radical on Gly-802 that is involved in catalysis.

It carries out the reaction (2S)-3-sulfopropanediol = 3-oxopropane-1-sulfonate + H2O. The protein operates within organosulfur degradation; alkanesulfonate degradation. In terms of biological role, involved in the degradation of the organosulfur compound 2(S)-dihydroxypropanesulfonate (DHPS). Catalyzes the radical-mediated dehydration of DHPS to produce 3-sulfopropionaldehyde (3-oxopropane-1-sulfonate). This is (2S)-3-sulfopropanediol dehydratase from Klebsiella oxytoca.